The primary structure comprises 326 residues: Homocysteine S-methyltransferase 1 (326 aa).

Residues 9-323 (LLEDLIKKCG…STINAISRDL (315 aa)) form the Hcy-binding domain. The Zn(2+) site is built by Cys241, Cys308, and Cys309.

Monomer. The cofactor is Zn(2+). Expressed predominantly in roots. Expressed in rosette leaves, cauline leaves and developing seeds.

The enzyme catalyses S-methyl-L-methionine + L-homocysteine = 2 L-methionine + H(+). Its activity is regulated as follows. Strongly inhibited by methionine. Its function is as follows. Catalyzes methyl transfer from S-methylmethionine (SMM) to adenosyl-L-homocysteine (AdoMet). SMM degradation (by HMT-1, HMT-2 and HMT-3) and biosynthesis (by MMT1) constitute the SMM cycle in plants, which is probably required to achieve short term control of AdoMet level. In Arabidopsis thaliana (Mouse-ear cress), this protein is Homocysteine S-methyltransferase 1 (HMT-1).